The primary structure comprises 60 residues: Large ribosomal subunit protein bL32 (60 aa).

The protein belongs to the bacterial ribosomal protein bL32 family.

The chain is Large ribosomal subunit protein bL32 from Desulfovibrio desulfuricans (strain ATCC 27774 / DSM 6949 / MB).